We begin with the raw amino-acid sequence, 149 residues long: Arginine repressor (149 aa).

Belongs to the ArgR family.

The protein localises to the cytoplasm. It functions in the pathway amino-acid biosynthesis; L-arginine biosynthesis [regulation]. Functionally, regulates arginine biosynthesis genes. The protein is Arginine repressor of Alkaliphilus metalliredigens (strain QYMF).